Here is a 475-residue protein sequence, read N- to C-terminus: MNLFFEKTGATNVAEFSVSEIAGALKRVVEEKFGYVRVRGEISGYRGAHASGHAYFALKDDKARLEAVIWRGIMEKLKFPPEEGMEVIAVGKLTTYPGSSKYQIVIEALEPTGVGALMTLLENRKKKFAEEGLFDEEKKKPLPYMPKIIGVVTSPTGAVIRDIIHRISDRFPLHILVWPVRVQGETSGREVAAAVKGFNVLPLEGLIPKPDLLIVARGGGSLEDLWGFNDEVVVRAVYESSLPVISAVGHETDWTLIDYVADWRAPTPTAAAEKAVPVKIDLEVYVVSLGARLRTGLARYFDFHQQKLRAIIRALPTADQLFALPRRGFDEISSRLERALCVSCDKKRLYFHTLAIRFTPRLLNTEKAQHSAKEYTARLHRAFVHIVEKQRAQLEIAFRLLKSTSYQNILERGFVLALGQNNKPIKRLAQIPEKEQINLRFFDGEISVITQESFFNRSSKSKRIKSKQDDQGTLF.

The protein belongs to the XseA family. Heterooligomer composed of large and small subunits.

The protein localises to the cytoplasm. The enzyme catalyses Exonucleolytic cleavage in either 5'- to 3'- or 3'- to 5'-direction to yield nucleoside 5'-phosphates.. Functionally, bidirectionally degrades single-stranded DNA into large acid-insoluble oligonucleotides, which are then degraded further into small acid-soluble oligonucleotides. The polypeptide is Exodeoxyribonuclease 7 large subunit (Bartonella henselae (strain ATCC 49882 / DSM 28221 / CCUG 30454 / Houston 1) (Rochalimaea henselae)).